Reading from the N-terminus, the 94-residue chain is Small ribosomal subunit protein bS6 (94 aa).

It belongs to the bacterial ribosomal protein bS6 family.

In terms of biological role, binds together with bS18 to 16S ribosomal RNA. This is Small ribosomal subunit protein bS6 from Alkaliphilus metalliredigens (strain QYMF).